Consider the following 317-residue polypeptide: Ferrochelatase (317 aa).

His192 and Glu271 together coordinate Fe cation.

It belongs to the ferrochelatase family.

The protein localises to the cytoplasm. The enzyme catalyses heme b + 2 H(+) = protoporphyrin IX + Fe(2+). It functions in the pathway porphyrin-containing compound metabolism; protoheme biosynthesis; protoheme from protoporphyrin-IX: step 1/1. Its function is as follows. Catalyzes the ferrous insertion into protoporphyrin IX. The protein is Ferrochelatase of Citrifermentans bemidjiense (strain ATCC BAA-1014 / DSM 16622 / JCM 12645 / Bem) (Geobacter bemidjiensis).